The sequence spans 970 residues: Probable histidine kinase 6 (970 aa).

Over 1 to 12 (MGKPEARSGWRN) the chain is Cytoplasmic. A helical transmembrane segment spans residues 13–33 (AAAAAWVLVAVACAAYMHWHL). The Extracellular portion of the chain corresponds to 34–306 (RRETMDRAEE…YRQKPPLPWS (273 aa)). One can recognise a CHASE domain in the interval 82 to 294 (FPSAIDQDTF…GDPFRAHEMR (213 aa)). Residues 307–327 (AITNPLGTFVIWMLVGYIICA) form a helical membrane-spanning segment. Topologically, residues 328–970 (AWSRYDKVSE…LVVGTKESAV (643 aa)) are cytoplasmic. Residues 362 to 651 (TVSHEIRTPM…TFTFSAVLKR (290 aa)) enclose the Histidine kinase domain. H365 bears the Phosphohistidine; by autocatalysis mark. 2 Response regulatory domains span residues 676–802 (KAIL…QQLL) and 827–962 (NILI…SRLV). D877 is subject to 4-aspartylphosphate.

Post-translationally, activation probably requires a transfer of a phosphate group between a His in the transmitter domain and an Asp of the receiver domain. In terms of tissue distribution, highly expressed in spikelets and at lower levels in roots, young leaves, mature leaves and stems.

It is found in the cell membrane. It carries out the reaction ATP + protein L-histidine = ADP + protein N-phospho-L-histidine.. In terms of biological role, cytokinin receptor related to bacterial two-component regulators. Functions as a histidine kinase and transmits the stress signal to a downstream MAPK cascade. The sequence is that of Probable histidine kinase 6 from Oryza sativa subsp. japonica (Rice).